An 82-amino-acid polypeptide reads, in one-letter code: uncharacterized protein (82 aa).

This is an uncharacterized protein from Dictyostelium discoideum (Social amoeba).